A 156-amino-acid chain; its full sequence is Transcription elongation factor GreA (156 aa).

Residues Met-1–Glu-84 adopt a coiled-coil conformation.

This sequence belongs to the GreA/GreB family.

In terms of biological role, necessary for efficient RNA polymerase transcription elongation past template-encoded arresting sites. The arresting sites in DNA have the property of trapping a certain fraction of elongating RNA polymerases that pass through, resulting in locked ternary complexes. Cleavage of the nascent transcript by cleavage factors such as GreA or GreB allows the resumption of elongation from the new 3'terminus. GreA releases sequences of 2 to 3 nucleotides. The polypeptide is Transcription elongation factor GreA (Ureaplasma urealyticum serovar 10 (strain ATCC 33699 / Western)).